Here is a 328-residue protein sequence, read N- to C-terminus: MSCSMKTEHLQSLSLLQWPLSYVAMFWIVQPLLICLLFTPLWPLPTVYFVWLLLDWKTPDKGGRRSDWVRNWNVWNHIRDYFPITILKTKDLSPSENYIMGVHPHGLLTFGAFCNFCTEATGFSKTFPGITPHLATLSWFFKIPIIRDYIMAKGLCSVSQASIDYLLSHGTGNLVGIVVGGVGEALQSVPNTTTLLLKKRKGFVRTALQHGAHLVPTFTFGETEVYDQVLFHEDSRMFKFQSLFRRIFGFYCCVFYGQGFHQDCKGLLPYHKPIITVVGEALPLPQVKNPSPEIVDKYHALYMDALYKLFEQHKVQYGCSNTQKLIFL.

The next 2 helical transmembrane spans lie at 12–32 (SLSL…VQPL) and 34–53 (ICLL…VWLL).

The protein belongs to the diacylglycerol acyltransferase family.

The protein resides in the endoplasmic reticulum membrane. The enzyme catalyses a long chain fatty alcohol + a fatty acyl-CoA = a wax ester + CoA. It catalyses the reaction 1,2-di-(9Z-octadecenoyl)-sn-glycerol + (9Z)-octadecenoyl-CoA = 1,2,3-tri-(9Z-octadecenoyl)-glycerol + CoA. It carries out the reaction hexadecan-1-ol + (9Z)-octadecenoyl-CoA = hexadecanyl (9Z)-octadecenoate + CoA. The catalysed reaction is decan-1-ol + (9Z)-octadecenoyl-CoA = 1-O-decyl-(9Z)-octadecenoate + CoA. The enzyme catalyses (9Z)-hexadecen-1-ol + (9Z)-octadecenoyl-CoA = 1-O-(9Z)-hexadecenyl (9Z)-octadecenoate + CoA. It catalyses the reaction octadecan-1-ol + (9Z)-octadecenoyl-CoA = 1-O-octadecyl (9Z)-octadecenoate + CoA. It carries out the reaction (9Z)-octadecen-1-ol + (9Z)-octadecenoyl-CoA = 1-O-(9Z)-octadecenyl (9Z)-octadecenoate + CoA. The catalysed reaction is hexadecan-1-ol + hexadecanoyl-CoA = hexadecanyl hexadecanoate + CoA. The enzyme catalyses hexadecan-1-ol + (9Z)-hexadecenoyl-CoA = 1-O-hexadecyl (9Z)-hexadecenoate + CoA. It catalyses the reaction hexadecan-1-ol + octadecanoyl-CoA = hexadecanyl octadecanoate + CoA. It carries out the reaction eicosan-1-ol + (9Z)-octadecenoyl-CoA = 1-O-eicosanyl (9Z)-octadecenoate + CoA. Functionally, acyltransferase that catalyzes the formation of ester bonds between fatty alcohols and fatty acyl-CoAs to form wax monoesters. Shows a strong preference for decyl alcohol (C10), with less activity towards C16 and C18 alcohols. Shows a strong preference for saturated acyl-CoAs. The sequence is that of Acyl-CoA wax alcohol acyltransferase 1 (Awat1) from Mus musculus (Mouse).